A 315-amino-acid chain; its full sequence is tRNA pseudouridine synthase B (315 aa).

The active-site Nucleophile is the D54.

This sequence belongs to the pseudouridine synthase TruB family. Type 1 subfamily.

It carries out the reaction uridine(55) in tRNA = pseudouridine(55) in tRNA. Its function is as follows. Responsible for synthesis of pseudouridine from uracil-55 in the psi GC loop of transfer RNAs. This Cupriavidus pinatubonensis (strain JMP 134 / LMG 1197) (Cupriavidus necator (strain JMP 134)) protein is tRNA pseudouridine synthase B.